The chain runs to 219 residues: Leukocyte surface antigen CD53 (219 aa).

The Cytoplasmic segment spans residues 2–11 (GMSSLKLLKY). A helical membrane pass occupies residues 12–32 (VLFFFNFLFWVCGCCILGFGI). The Extracellular segment spans residues 33–54 (HLLVQNTYGILFRNLPFLTLGN). The chain crosses the membrane as a helical span at residues 55–69 (VLVIVGSIIMVVAFL). The Cytoplasmic segment spans residues 70 to 80 (GCMGSIKENKC). The helical transmembrane segment at 81–106 (LLMSFFVLLLLILLAEVTLAILLFVY) threads the bilayer. At 107-181 (EKKINTLVAE…KKGQAWFHSN (75 aa)) the chain is on the extracellular side. 3 N-linked (GlcNAc...) asparagine glycosylation sites follow: asparagine 119, asparagine 129, and asparagine 148. A helical transmembrane segment spans residues 182 to 206 (FLYIGIVTICVCVIQVLGMSFALTL). The Cytoplasmic segment spans residues 207–219 (NCQIDKTSQALGL).

The protein belongs to the tetraspanin (TM4SF) family. Interacts with SCIMP. Interacts with CD45/PTPRC. Interacts with IL7R. Interacts with RBL2 and PPP2CA. Spleen and thymus, B-cells, monocytes, macrophages, neutrophils, single (CD4 or CD8) positive thymocytes, peripheral T-cells.

It is found in the cell membrane. Its subcellular location is the cell junction. The protein localises to the membrane. In terms of biological role, required for efficient formation of myofibers in regenerating muscle at the level of cell fusion. May be involved in growth regulation in hematopoietic cells. The sequence is that of Leukocyte surface antigen CD53 (Cd53) from Rattus norvegicus (Rat).